The following is a 439-amino-acid chain: Lactamase-like protein nscB (439 aa).

Zn(2+) is bound by residues H214, H216, D218, and H219. D218 functions as the Proton donor/acceptor in the catalytic mechanism.

Belongs to the metallo-beta-lactamase superfamily. Zn(2+) serves as cofactor.

It participates in secondary metabolite biosynthesis. Its function is as follows. Lactamase-like protein; part of the gene cluster that mediates the biosynthesis of neosartoricin B, a prenylated anthracenone that probably exhibits T-cell antiproliferative activity, suggestive of a physiological role as an immunosuppressive agent. The non-reducing polyketide synthase nscA probably synthesizes and cyclizes the decaketide backbone. The hydrolase nscB then mediates the product release through hydrolysis followed by spontaneous decarboxylation. The prenyltransferase nscD catalyzes the addition of the dimethylallyl group to the aromatic C5. The FAD-dependent monooxygenase nscC is then responsible for the stereospecific hydroxylation at C2. Neosartoricin B can be converted into two additional compounds neosartoricins C and D. Neosartoricin C is a spirocyclic compound that is cyclized through the attack of C3 hydroxyl on C14, followed by dehydration. On the other hand, neosartoricin D is a further cyclized compound in which attack of C2 on C14 in neosartoricin C results in the formation of the acetal-containing dioxabicyclo-octanone ring. Both of these compounds are novel and possibly represent related metabolites of the gene cluster. The protein is Lactamase-like protein nscB of Arthroderma benhamiae (strain ATCC MYA-4681 / CBS 112371) (Trichophyton mentagrophytes).